Reading from the N-terminus, the 128-residue chain is Probable 4-amino-4-deoxy-L-arabinose-phosphoundecaprenol flippase subunit ArnF (128 aa).

Residues 1–2 (MG) lie on the Cytoplasmic side of the membrane. Residues 3–23 (LMWGLFSVIIASVAQLSLGFA) traverse the membrane as a helical segment. Residues 24 to 35 (ASHLPPMTHLWD) are Periplasmic-facing. The chain crosses the membrane as a helical span at residues 36–56 (FIATLLAFGLDARILLLGLLG). Topologically, residues 57-77 (YLLSVFCWYKTLHKLALSKAY) are cytoplasmic. The chain crosses the membrane as a helical span at residues 78 to 98 (ALLSMSYVLVWIASMVLPGWG). The Periplasmic segment spans residues 99-100 (GT). The chain crosses the membrane as a helical span at residues 101–121 (FSLKALLGVACIMSGLMLIFL). At 122–128 (PTTKQRY) the chain is on the cytoplasmic side.

The protein belongs to the ArnF family. Heterodimer of ArnE and ArnF.

The protein localises to the cell inner membrane. It functions in the pathway bacterial outer membrane biogenesis; lipopolysaccharide biosynthesis. Functionally, translocates 4-amino-4-deoxy-L-arabinose-phosphoundecaprenol (alpha-L-Ara4N-phosphoundecaprenol) from the cytoplasmic to the periplasmic side of the inner membrane. The protein is Probable 4-amino-4-deoxy-L-arabinose-phosphoundecaprenol flippase subunit ArnF of Shigella dysenteriae serotype 1 (strain Sd197).